A 149-amino-acid chain; its full sequence is MATKIRLKRMGKKFYAFYRVVIMDSRTKRDGRAIEEIGTYNPNTQPSTININSERAQYWLGVGAQPTEQVLNLLKITGDWQKFKGLDGAEGTLKTVEAGPDAAARVEAVEAQAQKLKAAKSEADAKAKAEAEAAATEEAPAEEPAAEAE.

A disordered region spans residues 115–149 (KLKAAKSEADAKAKAEAEAAATEEAPAEEPAAEAE). Residues 119 to 131 (AKSEADAKAKAEA) are compositionally biased toward basic and acidic residues. The span at 139 to 149 (APAEEPAAEAE) shows a compositional bias: acidic residues.

It belongs to the bacterial ribosomal protein bS16 family.

This is Small ribosomal subunit protein bS16 from Bifidobacterium adolescentis (strain ATCC 15703 / DSM 20083 / NCTC 11814 / E194a).